A 733-amino-acid polypeptide reads, in one-letter code: Forkhead box protein K1 (733 aa).

At A2 the chain carries N-acetylalanine. The interaction with SIN3A and SIN3B stretch occupies residues 2-40 (AEVGEDSGARALLALRSAPCSPVLCAAAAAAAFPAAAPP). Residues 36 to 79 (AAAPPPAPAQPQPPPGPPPPPPPPLPPGAIAGAGSSGGSSGVSG) are disordered. Residues 37–62 (AAPPPAPAQPQPPPGPPPPPPPPLPP) show a composition bias toward pro residues. A required for interaction with FOXO4 and MEF2C region spans residues 95–420 (AASVRQSPGP…PLSSRSAPAS (326 aa)). Residue S101 is modified to Phosphoserine. In terms of domain architecture, FHA spans 123–175 (VTIGRNSSQGSVDLSMGLSSFISRRHLQLSFQEPHFYLRCLGKNGVFVDGAFQ). Omega-N-methylarginine is present on residues R161 and R191. Phosphoserine is present on residues S213, S223, S239, and S243. 2 positions are modified to phosphothreonine: T245 and T247. S253, S257, S295, and S299 each carry phosphoserine. Disordered regions lie at residues 287–306 (ASEQ…ESKP) and 413–436 (SSRS…GLQT). Residues 305-400 (KPPFSYAQLI…EQAFRKRRQR (96 aa)) constitute a DNA-binding region (fork-head). 2 positions are modified to phosphoserine: S416 and S420. Phosphothreonine is present on T422. S428 is subject to Phosphoserine. Position 436 is a phosphothreonine (T436). 3 positions are modified to phosphoserine: S441, S445, and S459. Residues 676–697 (VAATATTTPATATTASASASST) are compositionally biased toward low complexity. Positions 676–733 (VAATATTTPATATTASASASSTGEPEVKRSRVEEPSGAVTTPAGVIAAAGPQGPGTGE) are disordered. A compositionally biased stretch (basic and acidic residues) spans 700–709 (PEVKRSRVEE).

In terms of assembly, interacts with SIN3A and SIN3B (via PAH2) to form a complex which represses transcription. Component of SIN3A-, but not SIN3B-, containing multiprotein complexes. Interacts with FOXO4 and MEF2C; both interactions inhibit FOXO4 and MEF2C transactivation activity. Interacts (when phosphorylated) with YWHAE/14-3-3-epsilon; promotes sequestration in the cytoplasm and leads to impaired ability to bind DNA. Interacts with FHL2. Interacts with SRF. Interacts with DVL2 and DVL3; the interaction induces DVL2 nuclear translocation. Interacts with BAP1 (when phosphorylated). Accessory component of the polycomb repressive deubiquitinase (PR-DUB) complex, at least composed of BAP1, one of ASXL1, ASXL2 or (probably) ASXL3 and one of MBD5 or MBD6. The PR-DUB core associates with a number of accessory proteins, including FOXK1, FOXK2, KDM1B, HCFC1 and OGT. Phosphorylation by GSK3 (GSK3A or GSK3B) promotes interaction with YWHAE/14-3-3-epsilon and retention in the cytoplasm. In response to mTORC1 signaling, phosphorylation by GSK3 is prevented, leading to translocation to the nucleus. As to expression, expressed both developing and adult tissues. In adults, significant expression is seen in tumors of the brain, colon and lymph node.

Its subcellular location is the nucleus. The protein resides in the cytoplasm. In terms of biological role, transcriptional regulator involved in different processes such as glucose metabolism, aerobic glycolysis, muscle cell differentiation and autophagy. Recognizes and binds the forkhead DNA sequence motif (5'-GTAAACA-3') and can both act as a transcription activator or repressor, depending on the context. Together with FOXK2, acts as a key regulator of metabolic reprogramming towards aerobic glycolysis, a process in which glucose is converted to lactate in the presence of oxygen. Acts by promoting expression of enzymes for glycolysis (such as hexokinase-2 (HK2), phosphofructokinase, pyruvate kinase (PKLR) and lactate dehydrogenase), while suppressing further oxidation of pyruvate in the mitochondria by up-regulating pyruvate dehydrogenase kinases PDK1 and PDK4. Probably plays a role in gluconeogenesis during overnight fasting, when lactate from white adipose tissue and muscle is the main substrate. Involved in mTORC1-mediated metabolic reprogramming: in response to mTORC1 signaling, translocates into the nucleus and regulates the expression of genes associated with glycolysis and downstream anabolic pathways, such as HIF1A, thereby regulating glucose metabolism. Together with FOXK2, acts as a negative regulator of autophagy in skeletal muscle: in response to starvation, enters the nucleus, binds the promoters of autophagy genes and represses their expression, preventing proteolysis of skeletal muscle proteins. Acts as a transcriptional regulator of the myogenic progenitor cell population in skeletal muscle. Binds to the upstream enhancer region (CCAC box) of myoglobin (MB) gene, regulating the myogenic progenitor cell population. Promotes muscle progenitor cell proliferation by repressing the transcriptional activity of FOXO4, thereby inhibiting myogenic differentiation. Involved in remodeling processes of adult muscles that occur in response to physiological stimuli. Required to correct temporal orchestration of molecular and cellular events necessary for muscle repair. Represses myogenic differentiation by inhibiting MEFC activity. Positively regulates Wnt/beta-catenin signaling by translocating DVL into the nucleus. Reduces virus replication, probably by binding the interferon stimulated response element (ISRE) to promote antiviral gene expression. Accessory component of the polycomb repressive deubiquitinase (PR-DUB) complex; recruits the PR-DUB complex to specific FOXK1-bound genes. This chain is Forkhead box protein K1, found in Homo sapiens (Human).